The sequence spans 215 residues: Cytochrome b6 (215 aa).

The chain crosses the membrane as a helical span at residues 32–52 (IFYCLGGITLTCFLVQVATGF). Cys35 contributes to the heme c binding site. Heme b-binding residues include His86 and His100. The next 3 helical transmembrane spans lie at 90-110 (ASMM…TGGF), 116-136 (LTWV…VTGY), and 186-206 (LHTF…FPMI). Heme b contacts are provided by His187 and His202.

It belongs to the cytochrome b family. PetB subfamily. In terms of assembly, the 4 large subunits of the cytochrome b6-f complex are cytochrome b6, subunit IV (17 kDa polypeptide, PetD), cytochrome f and the Rieske protein, while the 4 small subunits are PetG, PetL, PetM and PetN. The complex functions as a dimer. Heme b serves as cofactor. Requires heme c as cofactor.

It is found in the plastid. The protein resides in the chloroplast thylakoid membrane. Component of the cytochrome b6-f complex, which mediates electron transfer between photosystem II (PSII) and photosystem I (PSI), cyclic electron flow around PSI, and state transitions. In Liriodendron tulipifera (Tuliptree), this protein is Cytochrome b6.